Here is a 20-residue protein sequence, read N- to C-terminus: Agglutinin beta-2 chain isoform 1 (20 aa).

A compositionally biased stretch (polar residues) spans 1-10; the sequence is TQSTGTSQTI. The interval 1–20 is disordered; it reads TQSTGTSQTIAVGLWGGPDN.

Belongs to the jacalin lectin family. Tetramer of four alpha chains associated with two or four beta chains.

Functionally, alpha-methyl-D-mannoside and D-mannose specific lectin. Binds IgA. The chain is Agglutinin beta-2 chain isoform 1 from Morus nigra (Black mulberry).